The primary structure comprises 267 residues: Transcription factor HES-1-A (267 aa).

The segment at 1 to 43 (MPADVMEKNSSSPVAATPASVSNTPDKPKTASEHRKSSKPIME) is disordered. Positions 10 to 22 (SSSPVAATPASVS) are enriched in low complexity. Positions 26-35 (DKPKTASEHR) are enriched in basic and acidic residues. The bHLH domain occupies 34-91 (HRKSSKPIMEKRRRARINESLGQLKTLILDALKKDSSRHSKLEKADILEMTVKHLRNL). The region spanning 110–143 (YRAGFSECMNEVTRFLSTCEGVNTDVRTRLLGHL) is the Orange domain. Positions 264-267 (WRPW) match the WRPW motif motif.

As to quaternary structure, transcription repression requires formation of a complex with a corepressor protein of the Groucho/TLE family. Interacts with the bHLH protein hes2, and binds DNA in the form of a heterodimer with the bHLH protein hey1/hrt1. Interacts with the bHLH protein hes6; this interaction may inhibit the transcriptional repressor activity. As to expression, starting from late neurula stage, weakly expressed in midline neural cells, where expression is restricted to the superficial layer of the prospective floorplate. Expressed in the posterior somitic mesoderm (PSM) at tailbud stage. During early tailbud stages, broadly expressed within the pronephric mesoderm both around and inside the developing pronephros. During late tailbud to early tadpole stages, expressed more ventrally in the pronephros, and although initially expressed in both the lateral and medial layers, by these later stages expression is predominantly in the lateral layer. Pronephric expression is no longer detectable in late tadpoles (stage 35).

The protein localises to the nucleus. Its function is as follows. Transcriptional repressor of a subset of early mesodermal genes including myod1 and t/bra. Binds DNA on N-box motifs: 5'-CACNAG-3'. Acts as a negative regulator of myogenesis, mediating Notch signaling to repress expression of myod1. This is Transcription factor HES-1-A (hes1-a) from Xenopus laevis (African clawed frog).